The sequence spans 1234 residues: ATP-dependent helicase/nuclease subunit A (1234 aa).

The UvrD-like helicase ATP-binding domain maps to 2 to 475; the sequence is TQFTTSQQAA…IILAENFRST (474 aa). 23-30 is a binding site for ATP; that stretch reads ASAGSGKT. The UvrD-like helicase C-terminal domain maps to 507 to 806; it reads YGALDYGDAH…KLMTIHKSKG (300 aa).

This sequence belongs to the helicase family. AddA subfamily. In terms of assembly, heterodimer of AddA and AddB/RexB. Requires Mg(2+) as cofactor.

It catalyses the reaction Couples ATP hydrolysis with the unwinding of duplex DNA by translocating in the 3'-5' direction.. It carries out the reaction ATP + H2O = ADP + phosphate + H(+). Functionally, the heterodimer acts as both an ATP-dependent DNA helicase and an ATP-dependent, dual-direction single-stranded exonuclease. Recognizes the chi site generating a DNA molecule suitable for the initiation of homologous recombination. The AddA nuclease domain is required for chi fragment generation; this subunit has the helicase and 3' -&gt; 5' nuclease activities. The chain is ATP-dependent helicase/nuclease subunit A from Lacticaseibacillus paracasei (strain ATCC 334 / BCRC 17002 / CCUG 31169 / CIP 107868 / KCTC 3260 / NRRL B-441) (Lactobacillus paracasei).